A 135-amino-acid polypeptide reads, in one-letter code: MALTLRVLCPDQNVFDGQADEVILPSTTGQLGVLPGHVSLLTALDVGVLRMRDGNQWTAIALMGGFAEVDDDEVSVLVNAAEPASGINAEEAQKQLSEAEQAWSKFDGQPNSPDKIKAQQAFQKARARLQATKAN.

A disordered region spans residues 91-122; the sequence is EAQKQLSEAEQAWSKFDGQPNSPDKIKAQQAF.

It belongs to the ATPase epsilon chain family. F-type ATPases have 2 components, CF(1) - the catalytic core - and CF(0) - the membrane proton channel. CF(1) has five subunits: alpha(3), beta(3), gamma(1), delta(1), epsilon(1). CF(0) has three main subunits: a, b and c.

Its subcellular location is the cellular thylakoid membrane. Functionally, produces ATP from ADP in the presence of a proton gradient across the membrane. This chain is ATP synthase epsilon chain, found in Synechococcus sp. (strain RCC307).